A 100-amino-acid polypeptide reads, in one-letter code: Large ribosomal subunit protein uL23 (100 aa).

Belongs to the universal ribosomal protein uL23 family. In terms of assembly, part of the 50S ribosomal subunit. Contacts protein L29, and trigger factor when it is bound to the ribosome.

One of the early assembly proteins it binds 23S rRNA. One of the proteins that surrounds the polypeptide exit tunnel on the outside of the ribosome. Forms the main docking site for trigger factor binding to the ribosome. The protein is Large ribosomal subunit protein uL23 of Pseudothermotoga lettingae (strain ATCC BAA-301 / DSM 14385 / NBRC 107922 / TMO) (Thermotoga lettingae).